A 622-amino-acid polypeptide reads, in one-letter code: 1-deoxy-D-xylulose-5-phosphate synthase (622 aa).

Thiamine diphosphate-binding positions include H80 and 121–123; that span reads GHS. D152 lines the Mg(2+) pocket. Thiamine diphosphate contacts are provided by residues 153–154, N181, Y288, and E369; that span reads GA. N181 lines the Mg(2+) pocket.

It belongs to the transketolase family. DXPS subfamily. Homodimer. Requires Mg(2+) as cofactor. The cofactor is thiamine diphosphate.

The enzyme catalyses D-glyceraldehyde 3-phosphate + pyruvate + H(+) = 1-deoxy-D-xylulose 5-phosphate + CO2. The protein operates within metabolic intermediate biosynthesis; 1-deoxy-D-xylulose 5-phosphate biosynthesis; 1-deoxy-D-xylulose 5-phosphate from D-glyceraldehyde 3-phosphate and pyruvate: step 1/1. Catalyzes the acyloin condensation reaction between C atoms 2 and 3 of pyruvate and glyceraldehyde 3-phosphate to yield 1-deoxy-D-xylulose-5-phosphate (DXP). The chain is 1-deoxy-D-xylulose-5-phosphate synthase from Psychromonas ingrahamii (strain DSM 17664 / CCUG 51855 / 37).